A 597-amino-acid chain; its full sequence is tRNA uridine 5-carboxymethylaminomethyl modification enzyme MnmG (597 aa).

10–15 (GGGHAG) is an FAD binding site. 267–281 (GPRYCPSIEDKVVRF) is a binding site for NAD(+).

Belongs to the MnmG family. In terms of assembly, homodimer. Heterotetramer of two MnmE and two MnmG subunits. The cofactor is FAD.

Its subcellular location is the cytoplasm. In terms of biological role, NAD-binding protein involved in the addition of a carboxymethylaminomethyl (cmnm) group at the wobble position (U34) of certain tRNAs, forming tRNA-cmnm(5)s(2)U34. This chain is tRNA uridine 5-carboxymethylaminomethyl modification enzyme MnmG, found in Thermus thermophilus (strain ATCC BAA-163 / DSM 7039 / HB27).